The sequence spans 299 residues: Apolipoprotein E (299 aa).

Residues 1–18 form the signal peptide; that stretch reads MKALWAVLVVTLLAGCRA. 8 tandem repeats follow at residues 74 to 95, 96 to 117, 118 to 139, 140 to 161, 162 to 183, 184 to 205, 206 to 223, and 224 to 245. The 8 X 22 AA approximate tandem repeats stretch occupies residues 74–245; that stretch reads VLMEDTMKEV…RLDEVREQME (172 aa). The segment at 152 to 162 is LDL and other lipoprotein receptors binding; the sequence is HLRKLRKRLLR. Residue 156–159 participates in heparin binding; it reads LRKR. The lipid-binding and lipoprotein association stretch occupies residues 204 to 273; it reads AALTGQPLRE…GWFEPMMEDM (70 aa). Heparin is bound at residue 219 to 226; the sequence is GERLRGRL. The specificity for association with VLDL stretch occupies residues 261-273; it reads RLKGWFEPMMEDM.

This sequence belongs to the apolipoprotein A1/A4/E family. As to quaternary structure, homotetramer. May interact with ABCA1; functionally associated with ABCA1 in the biogenesis of HDLs. May interact with APP/A4 amyloid-beta peptide; the interaction is extremely stable in vitro but its physiological significance is unclear. May interact with MAPT. May interact with MAP2. In the cerebrospinal fluid, interacts with secreted SORL1. Interacts with PMEL; this allows the loading of PMEL luminal fragment on ILVs to induce fibril nucleation. Post-translationally, APOE exists as multiple glycosylated and sialylated glycoforms within cells and in plasma. The extent of glycosylation and sialylation are tissue and context specific. In terms of processing, glycated in plasma VLDL. Phosphorylated by FAM20C in the extracellular medium.

It is found in the secreted. Its subcellular location is the extracellular space. The protein localises to the extracellular matrix. The protein resides in the extracellular vesicle. It localises to the endosome. It is found in the multivesicular body. APOE is an apolipoprotein, a protein associating with lipid particles, that mainly functions in lipoprotein-mediated lipid transport between organs via the plasma and interstitial fluids. APOE is a core component of plasma lipoproteins and is involved in their production, conversion and clearance. Apolipoproteins are amphipathic molecules that interact both with lipids of the lipoprotein particle core and the aqueous environment of the plasma. As such, APOE associates with chylomicrons, chylomicron remnants, very low density lipoproteins (VLDL) and intermediate density lipoproteins (IDL) but shows a preferential binding to high-density lipoproteins (HDL). It also binds a wide range of cellular receptors including the LDL receptor/LDLR and the very low-density lipoprotein receptor/VLDLR that mediate the cellular uptake of the APOE-containing lipoprotein particles. Finally, APOE also has a heparin-binding activity and binds heparan-sulfate proteoglycans on the surface of cells, a property that supports the capture and the receptor-mediated uptake of APOE-containing lipoproteins by cells. The polypeptide is Apolipoprotein E (APOE) (Heterocephalus glaber (Naked mole rat)).